A 678-amino-acid chain; its full sequence is Protein CASP (678 aa).

The Cytoplasmic segment spans residues 1–619 (MAANVGSMFQ…LVLSNKMART (619 aa)). Coiled coils occupy residues 67–450 (LLKS…QDLS) and 502–556 (LSII…FLQS). Residue Ser-586 is modified to Phosphoserine. A helical; Anchor for type IV membrane protein membrane pass occupies residues 620–640 (IGFFYTLFLHCLVFLVLYKLA). The Lumenal segment spans residues 641 to 678 (WSESMERDCATFCAKKFADHLHKFHENDNGAAAGDLWQ).

It belongs to the CASP family. Homodimer; disulfide-linked. Interacts with GOLGA5.

It localises to the golgi apparatus membrane. In terms of biological role, may be involved in intra-Golgi retrograde transport. In Homo sapiens (Human), this protein is Protein CASP (CUX1).